A 494-amino-acid polypeptide reads, in one-letter code: 4-trimethylaminobutyraldehyde dehydrogenase (494 aa).

N-acetylserine is present on serine 2. Lysine 30 bears the N6-acetyllysine; alternate mark. Lysine 30 carries the N6-succinyllysine; alternate modification. Lysine 59 is modified (N6-succinyllysine). NAD(+)-binding positions include lysine 180 and 232 to 236 (GSVPT). Glutamate 254 functions as the Proton acceptor in the catalytic mechanism. The active-site Nucleophile is cysteine 288. At lysine 298 the chain carries N6-acetyllysine. Lysine 303 carries the post-translational modification N6-acetyllysine; alternate. Lysine 303 is subject to N6-succinyllysine; alternate. At lysine 344 the chain carries N6-acetyllysine. An NAD(+)-binding site is contributed by glutamate 391.

It belongs to the aldehyde dehydrogenase family. In terms of assembly, homotetramer.

It localises to the cytoplasm. Its subcellular location is the cytosol. The enzyme catalyses 4-(trimethylamino)butanal + NAD(+) + H2O = 4-(trimethylamino)butanoate + NADH + 2 H(+). It catalyses the reaction an aldehyde + NAD(+) + H2O = a carboxylate + NADH + 2 H(+). It carries out the reaction 4-aminobutanal + NAD(+) + H2O = 4-aminobutanoate + NADH + 2 H(+). The catalysed reaction is formaldehyde + NAD(+) + H2O = formate + NADH + 2 H(+). The enzyme catalyses acetaldehyde + NAD(+) + H2O = acetate + NADH + 2 H(+). It catalyses the reaction imidazole-4-acetaldehyde + NAD(+) + H2O = imidazole-4-acetate + NADH + 2 H(+). It carries out the reaction acrolein + NAD(+) + H2O = acrylate + NADH + 2 H(+). The catalysed reaction is (5-hydroxyindol-3-yl)acetaldehyde + NAD(+) + H2O = (5-hydroxyindol-3-yl)acetate + NADH + 2 H(+). The enzyme catalyses 3,4-dihydroxyphenylacetaldehyde + NAD(+) + H2O = 3,4-dihydroxyphenylacetate + NADH + 2 H(+). It catalyses the reaction spermine monoaldehyde + NAD(+) + H2O = N-(2-carboxyethyl)spermidine + NADH + 2 H(+). It carries out the reaction propanal + NAD(+) + H2O = propanoate + NADH + 2 H(+). The catalysed reaction is butanal + NAD(+) + H2O = butanoate + NADH + 2 H(+). The enzyme catalyses pentanal + NAD(+) + H2O = pentanoate + NADH + 2 H(+). It catalyses the reaction hexanal + NAD(+) + H2O = hexanoate + NADH + 2 H(+). The protein operates within amine and polyamine biosynthesis; carnitine biosynthesis. Its function is as follows. Converts gamma-trimethylaminobutyraldehyde into gamma-butyrobetaine with high efficiency (in vitro). Can catalyze the irreversible oxidation of a broad range of aldehydes to the corresponding acids in an NAD-dependent reaction, but with low efficiency. Catalyzes the oxidation of aldehydes arising from biogenic amines and polyamines. The sequence is that of 4-trimethylaminobutyraldehyde dehydrogenase (ALDH9A1) from Sus scrofa (Pig).